A 180-amino-acid polypeptide reads, in one-letter code: UPF0398 protein EF_1150 (180 aa).

This sequence belongs to the UPF0398 family.

This is UPF0398 protein EF_1150 from Enterococcus faecalis (strain ATCC 700802 / V583).